The primary structure comprises 742 residues: NAD(P)H-quinone oxidoreductase subunit 5, chloroplastic (742 aa).

The next 16 membrane-spanning stretches (helical) occupy residues 9 to 29 (WIIP…LLLF), 40 to 60 (WSFQ…NLSI), 89 to 109 (IDPL…MVLI), 125 to 145 (FAYM…SNLI), 147 to 167 (IYIF…FWFT), 185 to 205 (GDFG…SFEF), 219 to 239 (NEVN…GAIA), 258 to 278 (TPIS…FLVA), 283 to 303 (LFIV…ITVF), 327 to 347 (LGYM…FHLI), 354 to 374 (ALLF…VGYC), 396 to 416 (NSFL…CFWS), 425 to 445 (WLYS…TAFY), 550 to 570 (LFPI…GIPF), 606 to 626 (FFSV…YKPV), and 722 to 742 (YLFF…FFNV).

The protein belongs to the complex I subunit 5 family. NDH is composed of at least 16 different subunits, 5 of which are encoded in the nucleus.

Its subcellular location is the plastid. It localises to the chloroplast thylakoid membrane. The enzyme catalyses a plastoquinone + NADH + (n+1) H(+)(in) = a plastoquinol + NAD(+) + n H(+)(out). The catalysed reaction is a plastoquinone + NADPH + (n+1) H(+)(in) = a plastoquinol + NADP(+) + n H(+)(out). Its function is as follows. NDH shuttles electrons from NAD(P)H:plastoquinone, via FMN and iron-sulfur (Fe-S) centers, to quinones in the photosynthetic chain and possibly in a chloroplast respiratory chain. The immediate electron acceptor for the enzyme in this species is believed to be plastoquinone. Couples the redox reaction to proton translocation, and thus conserves the redox energy in a proton gradient. The polypeptide is NAD(P)H-quinone oxidoreductase subunit 5, chloroplastic (ndhF) (Lactuca sativa (Garden lettuce)).